The chain runs to 218 residues: Sulfite reductase, assimilatory-type (218 aa).

Residues Cys91, Cys97, Cys131, and Cys135 each coordinate [4Fe-4S] cluster. Siroheme is bound at residue Cys135.

This enzyme catalyzes the 6-electron reduction of sulfite to sulfide. This is one of several activities required for the biosynthesis of L-cysteine from sulfate. This is Sulfite reductase, assimilatory-type from Nitratidesulfovibrio vulgaris (strain ATCC 29579 / DSM 644 / CCUG 34227 / NCIMB 8303 / VKM B-1760 / Hildenborough) (Desulfovibrio vulgaris).